The following is a 193-amino-acid chain: Acyl carrier protein phosphodiesterase (193 aa).

Belongs to the AcpH family.

The enzyme catalyses holo-[ACP] + H2O = apo-[ACP] + (R)-4'-phosphopantetheine + H(+). Functionally, converts holo-ACP to apo-ACP by hydrolytic cleavage of the phosphopantetheine prosthetic group from ACP. This Shigella boydii serotype 18 (strain CDC 3083-94 / BS512) protein is Acyl carrier protein phosphodiesterase.